The following is a 309-amino-acid chain: Short-chain dehydrogenase/reductase ARMGADRAFT_1018437 (309 aa).

Lysine 64, aspartate 86, and asparagine 113 together coordinate NADP(+). Catalysis depends on serine 167, which acts as the Proton donor. 2 residues coordinate NADP(+): tyrosine 196 and lysine 200. Tyrosine 196 functions as the Proton acceptor in the catalytic mechanism. Lysine 200 serves as the catalytic Lowers pKa of active site Tyr.

Belongs to the short-chain dehydrogenases/reductases (SDR) family.

It participates in secondary metabolite biosynthesis. Short-chain dehydrogenase/reductase, part of the gene cluster that mediates the biosynthesis of melleolides, a range of antifungal and phytotoxic polyketide derivatives composed of an orsellinic acid (OA) moiety esterified to various sesquiterpene alcohols. The first step in melleolides biosynthesis is performed by the delta(6)-protoilludene synthase PRO1 which catalyzes the cyclization of farnesyl diphosphate to protoilludene. The orsellinic acid synthase armB produces OA by condensing acetyl-CoA with 3 malonyl-CoA units in a three-round chain elongation reaction folowed by a C2-C7 ring closure. ArmB further catalyzes the trans-esterification of OA to the various sesquiterpene alcohols resulting from the hydroxylation of protoilludene. The melleolides cluster also includes 5 cytochrome P450 monooxygenases, 4 NAD(+)-dependent oxidoreductases, one flavin-dependent oxidoreductase, and one O-methyltransferase. The cytochrome P450 monooxygenases may be involved in protoilludene hydroxylation to elaborate melleolides with multiple alcohol groups, such as melleolide D, which carries alcohol functionalities at C-4, C-5, C-10, and C-13. The role of the NAD(+)-dependent enzymes remains unknown. Numerous melleolides, including arnamial, show 5'-O-methylation of the aromatic moiety which may be catalyzed by the methyltransferase encoded in the cluster. The flavin-dependent oxidoreductase might represent the dehydrogenase yielding the aldehyde in position 1 of arnamial and other melleolides. Finally, several halogenase localized outside of the cluster, are able to catalyze the transfer of a single chlorine atom to the melleolide backbone, resulting in a 6'-chloromelleolide product. In Armillaria gallica (Bulbous honey fungus), this protein is Short-chain dehydrogenase/reductase ARMGADRAFT_1018437.